The following is a 219-amino-acid chain: GPI-anchored hemophore PGA7 (219 aa).

The signal sequence occupies residues 1–13 (MHFIFYLILLVSA). Residues 17–126 (GNFGTYPKVP…SMLSTAAGDA (110 aa)) form the CFEM domain. 4 cysteine pairs are disulfide-bonded: Cys45/Cys85, Cys49/Cys80, Cys59/Cys66, and Cys68/Cys101. Asp63 is a binding site for heme. The interval 151-194 (VVSETGSASETGSSESAQSTTTGSSSTGSSSTDSSSSSSSSPSS) is disordered. The segment covering 153-194 (SETGSASETGSSESAQSTTTGSSSTGSSSTDSSSSSSSSPSS) has biased composition (low complexity). Residue Ser194 is the site of GPI-anchor amidated serine attachment. Residues 195–219 (SANFAVLQTGGIGSVILGFMMYLLV) constitute a propeptide, removed in mature form.

The protein belongs to the RBT5 family. As to quaternary structure, interacts with RBT5. Post-translationally, the GPI-anchor is attached to the protein in the endoplasmic reticulum and serves to target the protein to the cell surface. There, the glucosamine-inositol phospholipid moiety is cleaved off and the GPI-modified mannoprotein is covalently attached via its lipidless GPI glycan remnant to the 1,6-beta-glucan of the outer cell wall layer.

It localises to the secreted. Its subcellular location is the cell wall. It is found in the cell membrane. Functionally, GPI-linked hyphal surface heme-binding protein involved in heme-iron utilization. Heme transfer occurs between PGA7, RBT5 and CSA2 supporting a model in which the 3 CFEM proteins cooperate in a heme-acquisition system and form a cross-cell wall heme-transfer cascade. The ability to acquire iron from host tissues is a major virulence factor of pathogenic microorganisms. Required for biofilm formation. The protein is GPI-anchored hemophore PGA7 of Candida albicans (strain SC5314 / ATCC MYA-2876) (Yeast).